A 945-amino-acid chain; its full sequence is Glutamyl aminopeptidase (945 aa).

Residues 1–18 (MNFAEEEPSKKYCIKGKH) are Cytoplasmic-facing. A helical; Signal-anchor for type II membrane protein membrane pass occupies residues 19–39 (VAIICGVVVAVGLIVGLSVGL). Over 40 to 945 (TRSCEQDTTP…SIREWFASLP (906 aa)) the chain is Extracellular. Residues 43–77 (CEQDTTPAPSQPPPEASTALPPQDQNVCPDSEDES) form a disordered region. Residues Asn-116 and Asn-189 are each glycosylated (N-linked (GlcNAc...) asparagine). Substrate is bound at residue Glu-215. N-linked (GlcNAc...) asparagine glycosylation occurs at Asn-316. 349-353 (GAMEN) contributes to the substrate binding site. His-385 provides a ligand contact to Zn(2+). Glu-386 functions as the Proton acceptor in the catalytic mechanism. 2 residues coordinate Zn(2+): His-389 and Glu-408. Residues Asn-546, Asn-601, Asn-637, Asn-669, Asn-754, and Asn-792 are each glycosylated (N-linked (GlcNAc...) asparagine). A substrate-binding site is contributed by Arg-878.

The protein belongs to the peptidase M1 family. In terms of assembly, homodimer; disulfide-linked. Requires Zn(2+) as cofactor. Early B-lineage cells and certain stromal cell of hemopoietic tissues. Also expressed by capillary endothelial cells, placenta, and epithelial cells of the intestine and proximal renal tubules.

It is found in the cell membrane. It catalyses the reaction Release of N-terminal glutamate (and to a lesser extent aspartate) from a peptide.. With respect to regulation, substrate specificity is modulated by calcium which enhances the enzymatic activity for cleavage of acidic residues while reducing its activity with basic residues. Inhibited by aminopeptidase inhibitors amastatin and bestatin. Regulates central hypertension through its calcium-modulated preference to cleave N-terminal acidic residues from peptides such as angiotensin II. The sequence is that of Glutamyl aminopeptidase (Enpep) from Mus musculus (Mouse).